The sequence spans 590 residues: Arginine--tRNA ligase (590 aa).

Positions 126-136 match the 'HIGH' region motif; that stretch reads PNVAKEMHVGH.

It belongs to the class-I aminoacyl-tRNA synthetase family. In terms of assembly, monomer.

It is found in the cytoplasm. It catalyses the reaction tRNA(Arg) + L-arginine + ATP = L-arginyl-tRNA(Arg) + AMP + diphosphate. The polypeptide is Arginine--tRNA ligase (Streptomyces avermitilis (strain ATCC 31267 / DSM 46492 / JCM 5070 / NBRC 14893 / NCIMB 12804 / NRRL 8165 / MA-4680)).